The chain runs to 893 residues: DNA endonuclease RBBP8 (893 aa).

Positions 22–45 (ELWTKLKEYHDKEVQGLQVKVTKL) are essential for binding to the MRN complex and for RPA focus formation on DNA damage. Positions 35-84 (VQGLQVKVTKLKKERILDAQRLEEFFTKNQQLRDQQKVLQETIKILEDRL) form a coiled coil. A required for interaction with LMO4, probably by stabilizing the interaction through RPPB8 dimerization region spans residues 45–160 (LKKERILDAQ…AELACEENII (116 aa)). Glycyl lysine isopeptide (Lys-Gly) (interchain with G-Cter in SUMO2) cross-links involve residues lysine 62 and lysine 115. Residues 117 to 138 (ITELMNEKNTLQEENKKLSEQL) adopt a coiled-coil conformation. Lysine 193 is covalently cross-linked (Glycyl lysine isopeptide (Lys-Gly) (interchain with G-Cter in SUMO2)). A phosphoserine mark is found at serine 233 and serine 276. The segment covering 296 to 307 (MESARSKEDSLR) has biased composition (basic and acidic residues). The segment at 296-324 (MESARSKEDSLRFSDSASKTPPQEFTTRA) is disordered. Residues 308 to 324 (FSDSASKTPPQEFTTRA) show a composition bias toward polar residues. Phosphothreonine is present on threonine 315. 3 positions are modified to phosphoserine: serine 325, serine 326, and serine 348. Residues lysine 359 and lysine 377 each participate in a glycyl lysine isopeptide (Lys-Gly) (interchain with G-Cter in SUMO2) cross-link. Serine 378 carries the post-translational modification Phosphoserine. Glycyl lysine isopeptide (Lys-Gly) (interchain with G-Cter in SUMO2) cross-links involve residues lysine 394, lysine 403, lysine 409, and lysine 437. The PXDLS motif motif lies at 489 to 493 (PLDLS). The segment at 508–556 (NETSKNKLKQATIYEALKPIPKGSSSGRKALSGDCMPAKDSWETYCLQP) is damage-recruitment motif. Lysine 525 participates in a covalent cross-link: Glycyl lysine isopeptide (Lys-Gly) (interchain with G-Cter in SUMO2); alternate. Residues lysine 529, lysine 570, and lysine 576 each participate in a glycyl lysine isopeptide (Lys-Gly) (interchain with G-Cter in SUMO2) cross-link. A Glycyl lysine isopeptide (Lys-Gly) (interchain with G-Cter in SUMO2); alternate cross-link involves residue lysine 602. Glycyl lysine isopeptide (Lys-Gly) (interchain with G-Cter in SUMO2) cross-links involve residues lysine 611, lysine 636, and lysine 638. The interval 639-683 (ALPSNQDTSFENIQWSVDPGADLSQYKMDVTVIDTKDSSHSRLGG) is required for interaction with LMO4, probably by making physical contact with LMO4. Serine 662 carries the phosphoserine; by ATM modification. Lysine 674 participates in a covalent cross-link: Glycyl lysine isopeptide (Lys-Gly) (interchain with G-Cter in SUMO2). A Phosphoserine modification is found at serine 677. Lysine 716 is covalently cross-linked (Glycyl lysine isopeptide (Lys-Gly) (interchain with G-Cter in SUMO2)). Serine 720 carries the post-translational modification Phosphoserine. Serine 742 is subject to Phosphoserine; by ATM. Lysine 778 is covalently cross-linked (Glycyl lysine isopeptide (Lys-Gly) (interchain with G-Cter in SUMO2)). The short motif at 836–838 (FRY) is the KLHL15-binding element. Phosphothreonine occurs at positions 843 and 855. A Glycyl lysine isopeptide (Lys-Gly) (interchain with G-Cter in SUMO2) cross-link involves residue lysine 865. Positions 869 to 893 (DLSPRPKRRQPYNAVFSPKGKEQRT) are disordered.

Belongs to the COM1/SAE2/CtIP family. In terms of assembly, homotetramer; formed by antiparallel association of helical extensions protruding from the N-termini of two parallel coiled-coil dimers. Forms a dumbbell-shaped particle in which polar globular domains are held about 30 nm apart by a central rod. Homotetramerization is required for DNA-end resection and repair. Interacts (via the PXDLS motif) with CTBP1; the interaction is disrupted via binding of the adenovirus E1A to CTBP1. Component of the BRCA1-RBBP8 complex. Interacts (the Ser-326 phosphorylated form) with BRCA1 (via the C-terminal BRCT domains): the interaction occurs in the G2 phase, ubiquitinates RBBP8 and involves RBBP8 in BRCA1-dependent G2/M checkpoint control on DNA damage. Interacts with RB1. Interacts with the MRN complex. Interacts directly with MRE11; the interaction is required for efficient homologous recombination (HR) and regulation of the MRN complex. Interacts (when phosphorylated by CDK1) with NBN; promoting association with the MRN complex. Interacts with LMO4 (via the LIM zinc-binding 1 domain). Interacts with SIAH1. Interacts with RNF138. Interacts with EXD2. Interacts with CUL3 and KLHL15; this interaction leads to RBBP8 proteasomal degradation. Directly interacts with PIN1; this interaction depends upon RBBP8 phosphorylation, predominantly at Thr-315. Interacts with FZR1; this interaction leads to APC/C-mediated RBBP8 proteasomal degradation. Interacts with AUNIP; leading to recruit RBBP8 to sites of DNA damage. Interacts with SAMHD1. Interacts with HDGFL2. Post-translationally, hyperphosphorylation upon ionizing radiation results in dissociation from BRCA1. Phosphorylation at Thr-843 by CDK1 is essential for the recruitment to DNA and the DNA repair function. Phosphorylation at Thr-843 and Thr-855 promote interaction with NBN and recruitment to double-strand breaks (DSBs). Phosphorylated on Ser-326 as cells enter G2 phase. Phosphorylated at Ser-326 as cells enter G2 phase. This phosphorylation is required for binding BRCA1 and for the G2/M DNA damage transition checkpoint control. Phosphorylation at Thr-315 is required for PIN1-binding, while phosphorylation at Ser-276 serves as a PIN1 isomerization site. Phosphorylation at Thr-315 is cell-cycle dependent. It steadily increases during S phase, peaks at late S/G2 phase, and drops at G1. Phosphorylation is not required for tetramerization. Binds to DNA more strongly when dephosphorylated. In terms of processing, ubiquitinated. Ubiquitination at multiple sites by BRCA1 (via its N-terminal RING domain) does not lead to its proteasomal degradation but instead the ubiquitinated RBBP8 binds to chromatin following DNA damage and may play a role in G2/M checkpoint control. Ubiquitinated by RNF138 at its N-terminus. Ubiquitinated through 'Lys-48' by the E3 CUL3-KLHL15 complex; this modification leads to proteasomal degradation. Ubiquitinated by the E3 FZR1/APC/C complex; this modification leads to proteasomal degradation.

The protein resides in the nucleus. It is found in the chromosome. Functionally, endonuclease that cooperates with the MRE11-RAD50-NBN (MRN) complex in DNA-end resection, the first step of double-strand break (DSB) repair through the homologous recombination (HR) pathway. HR is restricted to S and G2 phases of the cell cycle and preferentially repairs DSBs resulting from replication fork collapse. Key determinant of DSB repair pathway choice, as it commits cells to HR by preventing classical non-homologous end-joining (NHEJ). Specifically promotes the endonuclease activity of the MRN complex to clear DNA ends containing protein adducts: recruited to DSBs by NBN following phosphorylation by CDK1, and promotes the endonuclease activity of MRE11 to clear protein-DNA adducts and generate clean double-strand break ends. Functions downstream of the MRN complex and ATM, promotes ATR activation and its recruitment to DSBs in the S/G2 phase facilitating the generation of ssDNA. Component of the BRCA1-RBBP8 complex that regulates CHEK1 activation and controls cell cycle G2/M checkpoints on DNA damage. During immunoglobulin heavy chain class-switch recombination, promotes microhomology-mediated alternative end joining (A-NHEJ) and plays an essential role in chromosomal translocations. Binds preferentially to DNA Y-junctions and to DNA substrates with blocked ends and promotes intermolecular DNA bridging. This chain is DNA endonuclease RBBP8 (Rbbp8), found in Mus musculus (Mouse).